The sequence spans 132 residues: Small ribosomal subunit protein uS8 (132 aa).

Belongs to the universal ribosomal protein uS8 family. As to quaternary structure, part of the 30S ribosomal subunit. Contacts proteins S5 and S12.

Functionally, one of the primary rRNA binding proteins, it binds directly to 16S rRNA central domain where it helps coordinate assembly of the platform of the 30S subunit. The protein is Small ribosomal subunit protein uS8 of Francisella tularensis subsp. tularensis (strain FSC 198).